A 292-amino-acid polypeptide reads, in one-letter code: 4-diphosphocytidyl-2-C-methyl-D-erythritol kinase (292 aa).

Lysine 20 is a catalytic residue. An ATP-binding site is contributed by 103–113; sequence PMGGGIGGGSS. Aspartate 145 is an active-site residue.

It belongs to the GHMP kinase family. IspE subfamily.

It carries out the reaction 4-CDP-2-C-methyl-D-erythritol + ATP = 4-CDP-2-C-methyl-D-erythritol 2-phosphate + ADP + H(+). The protein operates within isoprenoid biosynthesis; isopentenyl diphosphate biosynthesis via DXP pathway; isopentenyl diphosphate from 1-deoxy-D-xylulose 5-phosphate: step 3/6. In terms of biological role, catalyzes the phosphorylation of the position 2 hydroxy group of 4-diphosphocytidyl-2C-methyl-D-erythritol. This Cupriavidus necator (strain ATCC 17699 / DSM 428 / KCTC 22496 / NCIMB 10442 / H16 / Stanier 337) (Ralstonia eutropha) protein is 4-diphosphocytidyl-2-C-methyl-D-erythritol kinase.